The following is a 122-amino-acid chain: Diacylglycerol kinase (122 aa).

ATP is bound by residues arginine 10 and tyrosine 17. Residues arginine 10, 14-19 (AAGYSW), and 23-26 (RAAW) contribute to the substrate site. Glutamate 29 lines the ATP pocket. Glutamate 29 is an a divalent metal cation binding site. Substrate is bound by residues 31-35 (AFRQE), 48-51 (WLDV), arginine 56, and glutamate 70. A helical transmembrane segment spans residues 35–55 (EGVAVLLAVVIACWLDVDAIT). A helical transmembrane segment spans residues 57 to 77 (VLLISSVMLVMIVEILNSAIE). Glutamate 70 (proton acceptor) is an active-site residue. ATP contacts are provided by residues glutamate 77, 86-88 (EYH), and 95-96 (KD). Glutamate 77 provides a ligand contact to a divalent metal cation. A helical transmembrane segment spans residues 98–118 (GSAAVLIAIIVAVITWCILLW). Residues serine 99 and 113-118 (WCILLW) each bind substrate.

This sequence belongs to the bacterial diacylglycerol kinase family. Requires Mg(2+) as cofactor.

It localises to the cell inner membrane. The enzyme catalyses a 1,2-diacyl-sn-glycerol + ATP = a 1,2-diacyl-sn-glycero-3-phosphate + ADP + H(+). In terms of biological role, catalyzes the ATP-dependent phosphorylation of sn-l,2-diacylglycerol (DAG) to phosphatidic acid. Involved in the recycling of diacylglycerol produced as a by-product during membrane-derived oligosaccharide (MDO) biosynthesis. This chain is Diacylglycerol kinase (dgkA), found in Shigella flexneri.